A 346-amino-acid chain; its full sequence is tRNA pseudouridine synthase D (346 aa).

Aspartate 81 acts as the Nucleophile in catalysis. Residues 157-303 enclose the TRUD domain; the sequence is GVPNYFGLQR…MKHERRILRL (147 aa).

It belongs to the pseudouridine synthase TruD family.

It carries out the reaction uridine(13) in tRNA = pseudouridine(13) in tRNA. Functionally, responsible for synthesis of pseudouridine from uracil-13 in transfer RNAs. The protein is tRNA pseudouridine synthase D of Stutzerimonas stutzeri (strain A1501) (Pseudomonas stutzeri).